We begin with the raw amino-acid sequence, 76 residues long: FMRFamide-related neuropeptides (76 aa).

A signal peptide spans 1 to 27 (MCVQTRMLVAVAVVLVVLAVLSDPVSA). At phenylalanine 39 the chain carries Phenylalanine amide.

The protein belongs to the FARP (FMRFamide related peptide) family. As to expression, olfactory lobe and accessory lobe, olfactory globular tract, olfactory lobe cells (at protein level). Widely distributed throughout nervous system.

It is found in the secreted. GYRKPPFNGSIF-amide may be involved in olfaction and contraction of hindgut. The polypeptide is FMRFamide-related neuropeptides (Procambarus clarkii (Red swamp crayfish)).